Reading from the N-terminus, the 188-residue chain is V-type ATP synthase subunit E (188 aa).

It belongs to the V-ATPase E subunit family.

Produces ATP from ADP in the presence of a proton gradient across the membrane. The protein is V-type ATP synthase subunit E of Thermus thermophilus (strain ATCC BAA-163 / DSM 7039 / HB27).